Reading from the N-terminus, the 248-residue chain is Triosephosphate isomerase A (248 aa).

Asparagine 11 and lysine 13 together coordinate substrate. Histidine 95 acts as the Electrophile in catalysis. Glutamate 165 (proton acceptor) is an active-site residue.

It belongs to the triosephosphate isomerase family. Homodimer.

It localises to the cytoplasm. It catalyses the reaction dihydroxyacetone phosphate = methylglyoxal + phosphate. The catalysed reaction is D-glyceraldehyde 3-phosphate = dihydroxyacetone phosphate. It functions in the pathway carbohydrate degradation; glycolysis; D-glyceraldehyde 3-phosphate from glycerone phosphate: step 1/1. Its pathway is carbohydrate biosynthesis; gluconeogenesis. In terms of biological role, triosephosphate isomerase is an extremely efficient metabolic enzyme that catalyzes the interconversion between dihydroxyacetone phosphate (DHAP) and D-glyceraldehyde-3-phosphate (G3P) in glycolysis and gluconeogenesis. Functionally, it is also responsible for the non-negligible production of methylglyoxal a reactive cytotoxic side-product that modifies and can alter proteins, DNA and lipids. This Danio rerio (Zebrafish) protein is Triosephosphate isomerase A (tpi1a).